The chain runs to 314 residues: 2,3,4,5-tetrahydropyridine-2,6-dicarboxylate N-succinyltransferase (314 aa).

D163 and E180 together coordinate Mg(2+). The active-site Acyl-anhydride intermediate is E196. Succinyl-CoA is bound by residues R198, G213, S216, A239, 254-255, G262, K274, and 287-290; these read EA and RRNS.

It belongs to the type 2 tetrahydrodipicolinate N-succinyltransferase family. Homotrimer.

It is found in the cytoplasm. It catalyses the reaction (S)-2,3,4,5-tetrahydrodipicolinate + succinyl-CoA + H2O = (S)-2-succinylamino-6-oxoheptanedioate + CoA. It participates in amino-acid biosynthesis; L-lysine biosynthesis via DAP pathway; LL-2,6-diaminopimelate from (S)-tetrahydrodipicolinate (succinylase route): step 1/3. Its function is as follows. Catalyzes the conversion of the cyclic tetrahydrodipicolinate (THDP) into the acyclic N-succinyl-L-2-amino-6-oxopimelate using succinyl-CoA. In Mycolicibacterium smegmatis (strain ATCC 700084 / mc(2)155) (Mycobacterium smegmatis), this protein is 2,3,4,5-tetrahydropyridine-2,6-dicarboxylate N-succinyltransferase.